Consider the following 322-residue polypeptide: uncharacterized protein (322 aa).

Residues 34 to 286 (KFKQKIFKIP…QRLSKDKVPE (253 aa)) form the Radical SAM core domain. 3 residues coordinate [4Fe-4S] cluster: C50, C58, and C61.

The protein belongs to the radical SAM superfamily. It depends on [4Fe-4S] cluster as a cofactor.

This is an uncharacterized protein from Methanocaldococcus jannaschii (strain ATCC 43067 / DSM 2661 / JAL-1 / JCM 10045 / NBRC 100440) (Methanococcus jannaschii).